The primary structure comprises 359 residues: tRNA N6-adenosine threonylcarbamoyltransferase (359 aa).

The Fe cation site is built by His115 and His119. Residues 137–141 (LVSGG), Asp170, Gly183, and Asn283 contribute to the substrate site. Asp311 contacts Fe cation. The disordered stretch occupies residues 328–359 (APDSLDLAPRSRWPLDEKSAPLIGTGRRGAKA).

This sequence belongs to the KAE1 / TsaD family. Fe(2+) serves as cofactor.

It localises to the cytoplasm. The catalysed reaction is L-threonylcarbamoyladenylate + adenosine(37) in tRNA = N(6)-L-threonylcarbamoyladenosine(37) in tRNA + AMP + H(+). Its function is as follows. Required for the formation of a threonylcarbamoyl group on adenosine at position 37 (t(6)A37) in tRNAs that read codons beginning with adenine. Is involved in the transfer of the threonylcarbamoyl moiety of threonylcarbamoyl-AMP (TC-AMP) to the N6 group of A37, together with TsaE and TsaB. TsaD likely plays a direct catalytic role in this reaction. The sequence is that of tRNA N6-adenosine threonylcarbamoyltransferase from Brucella anthropi (strain ATCC 49188 / DSM 6882 / CCUG 24695 / JCM 21032 / LMG 3331 / NBRC 15819 / NCTC 12168 / Alc 37) (Ochrobactrum anthropi).